The sequence spans 175 residues: MENDLICLGVITSSHGISGHVKIKTFTENPEDFTSYGTLTDGINTYEVEIISIISQNIIIAQIKGIVSRTDADLLRNKKFFVEKNKLPNPTNDDEFYYSDLIGLNVVLENNNVYGNIKKIHNFGSCDIIEIRLSNSKKSTMLPFTKDIFPYVNVKEKYIIITLPEVIGNNSDIQR.

Residues 93-167 (DDEFYYSDLI…YIIITLPEVI (75 aa)) form the PRC barrel domain.

It belongs to the RimM family. In terms of assembly, binds ribosomal protein uS19.

It localises to the cytoplasm. In terms of biological role, an accessory protein needed during the final step in the assembly of 30S ribosomal subunit, possibly for assembly of the head region. Essential for efficient processing of 16S rRNA. May be needed both before and after RbfA during the maturation of 16S rRNA. It has affinity for free ribosomal 30S subunits but not for 70S ribosomes. The protein is Ribosome maturation factor RimM of Ehrlichia chaffeensis (strain ATCC CRL-10679 / Arkansas).